The chain runs to 534 residues: Cytochrome c oxidase subunit 1 (534 aa).

Residues 16–36 (VLYFIFSVFCGMAGTGMSMII) traverse the membrane as a helical segment. Ca(2+)-binding residues include Glu-39 and Gly-44. His-62 is a Fe(II)-heme a binding site. 6 consecutive transmembrane segments (helical) span residues 64–84 (ILMV…NYLL), 101–121 (ISFW…LVES), 147–167 (AIFA…NFIV), 183–203 (PLFV…LPVL), 235–255 (LFWF…FGVI), and 267–287 (VFGE…GFLV). Residue His-241 coordinates Cu cation. The segment at residues 241–245 (HPEVY) is a cross-link (1'-histidyl-3'-tyrosine (His-Tyr)). Tyr-245 provides a ligand contact to O2. Positions 290 and 291 each coordinate Cu cation. Helical transmembrane passes span 310-330 (MIIA…IYGG) and 338-358 (MMYA…GVAL). Mg(2+) contacts are provided by His-368 and Asp-369. Transmembrane regions (helical) follow at residues 372–392 (YVVA…MFAG) and 414–434 (FWLI…LGIN). His-376 provides a ligand contact to heme a3. His-378 lines the Fe(II)-heme a pocket. A Ca(2+)-binding site is contributed by Pro-441. A helical transmembrane segment spans residues 453-473 (VSSIGSFIAMISLILFIYILF).

Belongs to the heme-copper respiratory oxidase family. As to quaternary structure, component of the cytochrome c oxidase (complex IV, CIV), a multisubunit enzyme composed of a catalytic core of 3 subunits and several supernumerary subunits. The complex exists as a monomer or a dimer and forms supercomplexes (SCs) in the inner mitochondrial membrane with ubiquinol-cytochrome c oxidoreductase (cytochrome b-c1 complex, complex III, CIII). It depends on heme as a cofactor. Cu cation serves as cofactor.

The protein localises to the mitochondrion inner membrane. It carries out the reaction 4 Fe(II)-[cytochrome c] + O2 + 8 H(+)(in) = 4 Fe(III)-[cytochrome c] + 2 H2O + 4 H(+)(out). It participates in energy metabolism; oxidative phosphorylation. Its function is as follows. Component of the cytochrome c oxidase, the last enzyme in the mitochondrial electron transport chain which drives oxidative phosphorylation. The respiratory chain contains 3 multisubunit complexes succinate dehydrogenase (complex II, CII), ubiquinol-cytochrome c oxidoreductase (cytochrome b-c1 complex, complex III, CIII) and cytochrome c oxidase (complex IV, CIV), that cooperate to transfer electrons derived from NADH and succinate to molecular oxygen, creating an electrochemical gradient over the inner membrane that drives transmembrane transport and the ATP synthase. Cytochrome c oxidase is the component of the respiratory chain that catalyzes the reduction of oxygen to water. Electrons originating from reduced cytochrome c in the intermembrane space (IMS) are transferred via the dinuclear copper A center (CU(A)) of subunit 2 and heme A of subunit 1 to the active site in subunit 1, a binuclear center (BNC) formed by heme A3 and copper B (CU(B)). The BNC reduces molecular oxygen to 2 water molecules using 4 electrons from cytochrome c in the IMS and 4 protons from the mitochondrial matrix. In Vanderwaltozyma polyspora (strain ATCC 22028 / DSM 70294 / BCRC 21397 / CBS 2163 / NBRC 10782 / NRRL Y-8283 / UCD 57-17) (Kluyveromyces polysporus), this protein is Cytochrome c oxidase subunit 1 (COX1).